Here is a 717-residue protein sequence, read N- to C-terminus: ATP-dependent zinc metalloprotease FtsH (717 aa).

The Cytoplasmic segment spans residues 1–7; sequence MFKDKKM. The helical transmembrane segment at 8–28 threads the bilayer; the sequence is LKYIVIYSIIAFGILLTFNMV. The Extracellular portion of the chain corresponds to 29–109; it reads KDEMLYEKVD…VEFNVTKPEN (81 aa). A helical transmembrane segment spans residues 110-130; it reads YQLLGLLMSWVFPLILIFFVG. Over 131-717 the chain is Cytoplasmic; sequence RMMFSKMNNK…SSTNNKVDGE (587 aa). Residue 206 to 213 participates in ATP binding; sequence GPPGTGKT. Residue His427 participates in Zn(2+) binding. The active site involves Glu428. Zn(2+)-binding residues include His431 and Asp504. A disordered region spans residues 670 to 717; it reads KLARANNEANNDALDSSKENEEVKSNVNDGATEEKKDDSSTNNKVDGE. 2 stretches are compositionally biased toward basic and acidic residues: residues 684 to 693 and 701 to 717; these read DSSKENEEVK and TEEK…VDGE.

It in the central section; belongs to the AAA ATPase family. This sequence in the C-terminal section; belongs to the peptidase M41 family. As to quaternary structure, homohexamer. The cofactor is Zn(2+).

The protein resides in the cell membrane. Its function is as follows. Acts as a processive, ATP-dependent zinc metallopeptidase for both cytoplasmic and membrane proteins. Plays a role in the quality control of integral membrane proteins. In Clostridium perfringens (strain ATCC 13124 / DSM 756 / JCM 1290 / NCIMB 6125 / NCTC 8237 / Type A), this protein is ATP-dependent zinc metalloprotease FtsH.